The following is a 378-amino-acid chain: Mitogen-activated protein kinase mpkC (378 aa).

The region spanning 20 to 300 (YVNPQPIGMG…AQDALRHPYL (281 aa)) is the Protein kinase domain. ATP contacts are provided by residues 26–34 (IGMGSFGLV) and K49. The active-site Proton acceptor is the D141.

It belongs to the protein kinase superfamily. Ser/Thr protein kinase family. MAP kinase subfamily. Requires Mg(2+) as cofactor.

The protein resides in the nucleus. It catalyses the reaction L-seryl-[protein] + ATP = O-phospho-L-seryl-[protein] + ADP + H(+). The catalysed reaction is L-threonyl-[protein] + ATP = O-phospho-L-threonyl-[protein] + ADP + H(+). Activated by threonine and tyrosine phosphorylation. In terms of biological role, mitogen-activated protein kinase (MAPK), part of the high-osmolarity glycerol (HOG) pathway. With sakA, plays a role in the osmotic and oxidative stress responses. Involved in paradoxical growth, the cell wall integrity (CWI) pathway and biofilm formation. SakA and mpkC collaborate during virulence and mpkC could act by modulating sakA activity upon exposure to several types of stresses and during cell wall biosynthesis. This chain is Mitogen-activated protein kinase mpkC, found in Aspergillus fumigatus (strain CBS 144.89 / FGSC A1163 / CEA10) (Neosartorya fumigata).